The primary structure comprises 179 residues: Large ribosomal subunit protein uL6 (179 aa).

The protein belongs to the universal ribosomal protein uL6 family. As to quaternary structure, part of the 50S ribosomal subunit.

This protein binds to the 23S rRNA, and is important in its secondary structure. It is located near the subunit interface in the base of the L7/L12 stalk, and near the tRNA binding site of the peptidyltransferase center. This is Large ribosomal subunit protein uL6 from Rhodococcus erythropolis (strain PR4 / NBRC 100887).